The chain runs to 474 residues: Nuclear receptor ROR-alpha B (474 aa).

Positions 14–89 (SIPCKICGDK…VGMSRDAVKF (76 aa)) form a DNA-binding region, nuclear receptor. 2 consecutive NR C4-type zinc fingers follow at residues 17-37 (CKICGDKSSGIHYGVITCEGC) and 53-72 (CPRQKSCLIDRTSRNRCQHC). Over residues 98–124 (DSLFAEVQKHRQQQQDDKTGDESEKNQ) the composition is skewed to basic and acidic residues. Positions 98-144 (DSLFAEVQKHRQQQQDDKTGDESEKNQESQAPGEAEPLTPSYALSSS) are disordered. The region spanning 223 to 461 (DLEHLSENIC…TRFPPLYKEL (239 aa)) is the NR LBD domain. The segment at 450-461 (VHTRFPPLYKEL) is AF-2.

This sequence belongs to the nuclear hormone receptor family.

Its subcellular location is the nucleus. Functionally, nuclear receptor that binds DNA as a monomer to ROR response elements (RORE). Required for proper cerebellum development. The sequence is that of Nuclear receptor ROR-alpha B (rorab) from Danio rerio (Zebrafish).